The chain runs to 775 residues: DENN domain-containing protein 1B (775 aa).

Residues Asp14–Thr143 form the uDENN domain. Positions Gly180–Lys316 constitute a cDENN domain. Residues Gln318 to Gly395 form the dDENN domain. An FXDXF motif motif is present at residues Phe398–Phe402. Tyr520 carries the phosphotyrosine modification. Ser535, Ser536, Ser549, and Ser552 each carry phosphoserine. A Clathrin box motif is present at residues Asp566–Leu575. Disordered stretches follow at residues Asp635–Ser654 and His671–Thr706. Positions His639–Val651 are enriched in basic residues. Ser652 and Ser653 each carry phosphoserine. Residues Gln695–Thr706 are compositionally biased toward basic and acidic residues.

In terms of assembly, interacts with RAB35. Interacts with clathrin heavy chain/CLTC. Interacts with components of the adapter protein complex 2 (AP-2) AP2A2 and AP2B1. Interacts with CD3E. Phosphorylated on serine and/or threonine, possibly regulating the guanine nucleotide exchange factor (GEF) activity. In terms of tissue distribution, highly expressed in dendritic and natural killer cells and at lower levels in other myeloid lineage cells and in pituitary. Significantly up-regulated in effector memory T-cells as compared with naive T-cells.

The protein resides in the cytoplasm. It is found in the cytosol. It localises to the cytoplasmic vesicle. Its subcellular location is the clathrin-coated vesicle. In terms of biological role, guanine nucleotide exchange factor (GEF) for RAB35 that acts as a regulator of T-cell receptor (TCR) internalization in TH2 cells. Acts by promoting the exchange of GDP to GTP, converting inactive GDP-bound RAB35 into its active GTP-bound form. Plays a role in clathrin-mediated endocytosis. Controls cytokine production in TH2 lymphocytes by controlling the rate of TCR internalization and routing to endosomes: acts by mediating clathrin-mediated endocytosis of TCR via its interaction with the adapter protein complex 2 (AP-2) and GEF activity. Dysregulation leads to impaired TCR down-modulation and recycling, affecting cytokine production in TH2 cells. The polypeptide is DENN domain-containing protein 1B (Homo sapiens (Human)).